Reading from the N-terminus, the 105-residue chain is Molt-inhibiting hormone (105 aa).

A signal peptide spans 1–28; the sequence is MYRLAMRTWLAIVIVVVGTSLLFDTASA. Disulfide bonds link C35/C72, C52/C68, and C55/C81.

Belongs to the arthropod CHH/MIH/GIH/VIH hormone family. Produced by the medulla terminalis X-organ in the eyestalks and transported to the sinus gland where it is stored and released.

It is found in the secreted. Inhibits Y-organs where molting hormone (ecdysteroid) is secreted. A molting cycle is initiated when MIH secretion diminishes or stops. Has little or no hyperglycemic activity. The sequence is that of Molt-inhibiting hormone from Penaeus japonicus (Kuruma prawn).